The following is a 432-amino-acid chain: Putative transposase A625R (432 aa).

Zn(2+) is bound by residues C375, C378, C393, and C395.

In the N-terminal section; belongs to the transposase 2 family. The protein in the C-terminal section; belongs to the transposase 35 family.

This Chlorella (PBCV-1) protein is Putative transposase A625R.